The primary structure comprises 145 residues: UPF0179 protein Maeo_1037 (145 aa).

This sequence belongs to the UPF0179 family.

In Methanococcus aeolicus (strain ATCC BAA-1280 / DSM 17508 / OCM 812 / Nankai-3), this protein is UPF0179 protein Maeo_1037.